We begin with the raw amino-acid sequence, 454 residues long: Prenyltransferase nscD (454 aa).

The protein belongs to the tryptophan dimethylallyltransferase family.

Its pathway is secondary metabolite biosynthesis. Prenyltransferase; part of the gene cluster that mediates the biosynthesis of neosartoricin, a prenylated anthracenone that exhibits T-cell antiproliferative activity, suggestive of a physiological role as an immunosuppressive agent. The non-reducing polyketide synthase nscA probably synthesizes and cyclizes the decaketide backbone. The hydrolase nscB then mediates the product release through hydrolysis followed by spontaneous decarboxylation. The prenyltransferase nscD catalyzes the addition of the dimethylallyl group to the aromatic C5. The FAD-dependent monooxygenase nscC is then responsible for the stereospecific hydroxylation at C2. There is no gene encoding O-acetyltransferase in the nsc gene cluster; thus, the last step of 2-O-acetylation leading to neosartoricin may be catalyzed by an unidentified O-acetyltransferase. This is Prenyltransferase nscD from Neosartorya fischeri (strain ATCC 1020 / DSM 3700 / CBS 544.65 / FGSC A1164 / JCM 1740 / NRRL 181 / WB 181) (Aspergillus fischerianus).